The primary structure comprises 275 residues: 3-methyl-2-oxobutanoate hydroxymethyltransferase (275 aa).

Mg(2+) is bound by residues D49 and D88. Residues 49–50, D88, and K118 contribute to the 3-methyl-2-oxobutanoate site; that span reads DS. Residue E120 participates in Mg(2+) binding. E187 (proton acceptor) is an active-site residue.

It belongs to the PanB family. In terms of assembly, homodecamer; pentamer of dimers. Requires Mg(2+) as cofactor.

It localises to the cytoplasm. The catalysed reaction is 3-methyl-2-oxobutanoate + (6R)-5,10-methylene-5,6,7,8-tetrahydrofolate + H2O = 2-dehydropantoate + (6S)-5,6,7,8-tetrahydrofolate. The protein operates within cofactor biosynthesis; (R)-pantothenate biosynthesis; (R)-pantoate from 3-methyl-2-oxobutanoate: step 1/2. In terms of biological role, catalyzes the reversible reaction in which hydroxymethyl group from 5,10-methylenetetrahydrofolate is transferred onto alpha-ketoisovalerate to form ketopantoate. This is 3-methyl-2-oxobutanoate hydroxymethyltransferase from Bartonella quintana (strain Toulouse) (Rochalimaea quintana).